Reading from the N-terminus, the 340-residue chain is Uroporphyrinogen decarboxylase (340 aa).

Substrate contacts are provided by residues Arg21 to Arg25, Asp71, Tyr148, Ser203, and His316.

Belongs to the uroporphyrinogen decarboxylase family. Homodimer.

Its subcellular location is the cytoplasm. It carries out the reaction uroporphyrinogen III + 4 H(+) = coproporphyrinogen III + 4 CO2. The protein operates within porphyrin-containing compound metabolism; protoporphyrin-IX biosynthesis; coproporphyrinogen-III from 5-aminolevulinate: step 4/4. Functionally, catalyzes the decarboxylation of four acetate groups of uroporphyrinogen-III to yield coproporphyrinogen-III. This Campylobacter lari (strain RM2100 / D67 / ATCC BAA-1060) protein is Uroporphyrinogen decarboxylase.